The sequence spans 331 residues: Terpene synthase 8 (331 aa).

The short motif at 97–102 (DDFYLE) is the DDxx(x)D/E motif element. Positions 228–236 (NDIYSFNKE) match the NDxxSxxxD/E motif motif.

The protein belongs to the terpene synthase family.

Its function is as follows. Terpene synthase that converts its substrate farnesyl diphosphate (FPP) into several yet unidentified sesquiterpenes. This Dictyostelium purpureum (Slime mold) protein is Terpene synthase 8.